A 314-amino-acid polypeptide reads, in one-letter code: 2,3,4,5-tetrahydropyridine-2,6-dicarboxylate N-succinyltransferase (314 aa).

Residues D163 and E180 each coordinate Mg(2+). The Acyl-anhydride intermediate role is filled by E196. Succinyl-CoA contacts are provided by residues R198, G213, S216, A239, 254–255, G262, K274, and 287–290; these read EA and RRNS.

This sequence belongs to the type 2 tetrahydrodipicolinate N-succinyltransferase family. In terms of assembly, homotrimer.

The protein localises to the cytoplasm. The catalysed reaction is (S)-2,3,4,5-tetrahydrodipicolinate + succinyl-CoA + H2O = (S)-2-succinylamino-6-oxoheptanedioate + CoA. Its pathway is amino-acid biosynthesis; L-lysine biosynthesis via DAP pathway; LL-2,6-diaminopimelate from (S)-tetrahydrodipicolinate (succinylase route): step 1/3. Its function is as follows. Catalyzes the conversion of the cyclic tetrahydrodipicolinate (THDP) into the acyclic N-succinyl-L-2-amino-6-oxopimelate using succinyl-CoA. This chain is 2,3,4,5-tetrahydropyridine-2,6-dicarboxylate N-succinyltransferase, found in Mycolicibacterium smegmatis (strain ATCC 700084 / mc(2)155) (Mycobacterium smegmatis).